Consider the following 220-residue polypeptide: tRNA (guanine-N(7)-)-methyltransferase (220 aa).

Positions 44, 69, 96, and 118 each coordinate S-adenosyl-L-methionine. D118 is a catalytic residue. K122 is a binding site for substrate. An interaction with RNA region spans residues 124–129 (RHEKRR). Substrate is bound by residues D154 and 191–194 (TEYE).

It belongs to the class I-like SAM-binding methyltransferase superfamily. TrmB family.

It catalyses the reaction guanosine(46) in tRNA + S-adenosyl-L-methionine = N(7)-methylguanosine(46) in tRNA + S-adenosyl-L-homocysteine. It functions in the pathway tRNA modification; N(7)-methylguanine-tRNA biosynthesis. Its function is as follows. Catalyzes the formation of N(7)-methylguanine at position 46 (m7G46) in tRNA. The polypeptide is tRNA (guanine-N(7)-)-methyltransferase (Halalkalibacterium halodurans (strain ATCC BAA-125 / DSM 18197 / FERM 7344 / JCM 9153 / C-125) (Bacillus halodurans)).